A 1016-amino-acid polypeptide reads, in one-letter code: Protein kinase C-like 2 (1016 aa).

The REM-1 1 domain maps to 1–68; the sequence is MDMIDEAITE…LEKLKLRKNG (68 aa). The disordered stretch occupies residues 68-101; that stretch reads GVRKSNSEKPSVGIEKNPSFSTTKSAKSFSSTSS. Low complexity predominate over residues 86-101; the sequence is SFSTTKSAKSFSSTSS. Positions 111-188 constitute an REM-1 2 domain; it reads NYDTPLTISK…LKRYHDLHIE (78 aa). The C2 domain maps to 195-307; that stretch reads PSTESRGNLN…VEKQRRKKVE (113 aa). 2 Phorbol-ester/DAG-type zinc fingers span residues 405–453 and 473–523; these read GHKF…VTKC and PHHF…PDFC. The interval 543–602 is disordered; the sequence is YKAQQHKQKSSHHKHHHHKKSKSSSSKHKENDKASVSITTTTTPSITPADPVPTSPKPLA. A compositionally biased stretch (basic residues) spans 546–568; that stretch reads QQHKQKSSHHKHHHHKKSKSSSS. Over residues 579–590 the composition is skewed to low complexity; sequence SITTTTTPSITP. The Protein kinase domain occupies 683 to 942; it reads FTFLSVLGKG…AEDVMTHPFF (260 aa). ATP contacts are provided by residues 689-697 and Lys712; that span reads LGKGNFGKV. The active-site Proton acceptor is the Asp808. An AGC-kinase C-terminal domain is found at 943–1013; that stretch reads SNINWDDIYH…SCEDDKPSTT (71 aa). Thr984 carries the phosphothreonine modification.

Belongs to the protein kinase superfamily. AGC Ser/Thr protein kinase family. PKC subfamily. In terms of assembly, interacts with rho2.

It carries out the reaction L-seryl-[protein] + ATP = O-phospho-L-seryl-[protein] + ADP + H(+). The enzyme catalyses L-threonyl-[protein] + ATP = O-phospho-L-threonyl-[protein] + ADP + H(+). Its function is as follows. Involved in the control of the cell shape. Target of the inhibitor staurosporine. This Schizosaccharomyces pombe (strain 972 / ATCC 24843) (Fission yeast) protein is Protein kinase C-like 2 (pck2).